The primary structure comprises 85 residues: Putative defensin-like protein 258 (85 aa).

The N-terminal stretch at 1-25 is a signal peptide; sequence MINVSLKRSLLIFISVITSNIGSEA. 3 disulfides stabilise this stretch: Cys57-Cys75, Cys63-Cys82, and Cys67-Cys84.

Belongs to the DEFL family.

Its subcellular location is the secreted. The chain is Putative defensin-like protein 258 from Arabidopsis thaliana (Mouse-ear cress).